Here is a 145-residue protein sequence, read N- to C-terminus: Holo-[acyl-carrier-protein] synthase (145 aa).

Residues aspartate 9 and glutamate 63 each contribute to the Mg(2+) site.

The protein belongs to the P-Pant transferase superfamily. AcpS family. Mg(2+) serves as cofactor.

The protein resides in the cytoplasm. It catalyses the reaction apo-[ACP] + CoA = holo-[ACP] + adenosine 3',5'-bisphosphate + H(+). Transfers the 4'-phosphopantetheine moiety from coenzyme A to a Ser of acyl-carrier-protein. The chain is Holo-[acyl-carrier-protein] synthase from Burkholderia vietnamiensis (strain G4 / LMG 22486) (Burkholderia cepacia (strain R1808)).